The primary structure comprises 265 residues: Indole-3-glycerol phosphate synthase (265 aa).

Belongs to the TrpC family.

It catalyses the reaction 1-(2-carboxyphenylamino)-1-deoxy-D-ribulose 5-phosphate + H(+) = (1S,2R)-1-C-(indol-3-yl)glycerol 3-phosphate + CO2 + H2O. Its pathway is amino-acid biosynthesis; L-tryptophan biosynthesis; L-tryptophan from chorismate: step 4/5. The polypeptide is Indole-3-glycerol phosphate synthase (Xanthomonas oryzae pv. oryzae (strain MAFF 311018)).